The following is a 299-amino-acid chain: Acetyl-coenzyme A carboxylase carboxyl transferase subunit beta (299 aa).

The region spanning 25 to 294 (VWTKCTSCEQ…PFVEPELIQE (270 aa)) is the CoA carboxyltransferase N-terminal domain. Positions 29, 32, 48, and 51 each coordinate Zn(2+). The C4-type zinc finger occupies 29-51 (CTSCEQVLYRDELKRHLEVCPKC).

Belongs to the AccD/PCCB family. In terms of assembly, acetyl-CoA carboxylase is a heterohexamer composed of biotin carboxyl carrier protein (AccB), biotin carboxylase (AccC) and two subunits each of ACCase subunit alpha (AccA) and ACCase subunit beta (AccD). The cofactor is Zn(2+).

It localises to the cytoplasm. The enzyme catalyses N(6)-carboxybiotinyl-L-lysyl-[protein] + acetyl-CoA = N(6)-biotinyl-L-lysyl-[protein] + malonyl-CoA. It functions in the pathway lipid metabolism; malonyl-CoA biosynthesis; malonyl-CoA from acetyl-CoA: step 1/1. Its function is as follows. Component of the acetyl coenzyme A carboxylase (ACC) complex. Biotin carboxylase (BC) catalyzes the carboxylation of biotin on its carrier protein (BCCP) and then the CO(2) group is transferred by the transcarboxylase to acetyl-CoA to form malonyl-CoA. In Histophilus somni (strain 129Pt) (Haemophilus somnus), this protein is Acetyl-coenzyme A carboxylase carboxyl transferase subunit beta.